The chain runs to 437 residues: tRNA-2-methylthio-N(6)-dimethylallyladenosine synthase (437 aa).

The 116-residue stretch at 2–117 folds into the MTTase N-terminal domain; the sequence is KHLYIKTFGC…LPQMIQRALD (116 aa). [4Fe-4S] cluster contacts are provided by cysteine 11, cysteine 48, cysteine 80, cysteine 154, cysteine 158, and cysteine 161. In terms of domain architecture, Radical SAM core spans 140–372; that stretch reads RAQGVVGQVT…QQLLNTQQLQ (233 aa). The region spanning 375–437 is the TRAM domain; that stretch reads KARVGRRESV…LPNSLRGRLV (63 aa).

It belongs to the methylthiotransferase family. MiaB subfamily. In terms of assembly, monomer. It depends on [4Fe-4S] cluster as a cofactor.

It localises to the cytoplasm. The enzyme catalyses N(6)-dimethylallyladenosine(37) in tRNA + (sulfur carrier)-SH + AH2 + 2 S-adenosyl-L-methionine = 2-methylsulfanyl-N(6)-dimethylallyladenosine(37) in tRNA + (sulfur carrier)-H + 5'-deoxyadenosine + L-methionine + A + S-adenosyl-L-homocysteine + 2 H(+). Catalyzes the methylthiolation of N6-(dimethylallyl)adenosine (i(6)A), leading to the formation of 2-methylthio-N6-(dimethylallyl)adenosine (ms(2)i(6)A) at position 37 in tRNAs that read codons beginning with uridine. This is tRNA-2-methylthio-N(6)-dimethylallyladenosine synthase from Magnetococcus marinus (strain ATCC BAA-1437 / JCM 17883 / MC-1).